Here is a 129-residue protein sequence, read N- to C-terminus: Small ribosomal subunit protein uS8 (129 aa).

Belongs to the universal ribosomal protein uS8 family. In terms of assembly, part of the 30S ribosomal subunit. Contacts proteins S5 and S12.

One of the primary rRNA binding proteins, it binds directly to 16S rRNA central domain where it helps coordinate assembly of the platform of the 30S subunit. This chain is Small ribosomal subunit protein uS8, found in Mesoplasma florum (strain ATCC 33453 / NBRC 100688 / NCTC 11704 / L1) (Acholeplasma florum).